A 350-amino-acid chain; its full sequence is Aminomethyltransferase (350 aa).

The protein belongs to the GcvT family. The glycine cleavage system is composed of four proteins: P, T, L and H.

The catalysed reaction is N(6)-[(R)-S(8)-aminomethyldihydrolipoyl]-L-lysyl-[protein] + (6S)-5,6,7,8-tetrahydrofolate = N(6)-[(R)-dihydrolipoyl]-L-lysyl-[protein] + (6R)-5,10-methylene-5,6,7,8-tetrahydrofolate + NH4(+). The glycine cleavage system catalyzes the degradation of glycine. The protein is Aminomethyltransferase of Aquifex aeolicus (strain VF5).